A 279-amino-acid polypeptide reads, in one-letter code: Dehydrogenase/reductase SDR family member 4 (279 aa).

37 to 61 contacts NADP(+); it reads LVTASTDGIGLAIARRLAEDGAHVV. An N6-acetyllysine; alternate modification is found at K93. N6-succinyllysine; alternate is present on K93. An N6-acetyllysine modification is found at K106. S170 contributes to the substrate binding site. Residue Y183 is the Proton acceptor of the active site. K187 is an NADP(+) binding site. The residue at position 217 (K217) is an N6-acetyllysine; alternate. An N6-succinyllysine; alternate modification is found at K217. Position 221 is a phosphoserine (S221). K228 and K235 each carry N6-succinyllysine. The short motif at 277 to 279 is the Peroxisomal targeting signal element; it reads SRL.

It belongs to the short-chain dehydrogenases/reductases (SDR) family. As to quaternary structure, homotetramer.

It is found in the peroxisome. The enzyme catalyses a secondary alcohol + NADP(+) = a ketone + NADPH + H(+). It catalyses the reaction 3alpha-hydroxy-5beta-pregnan-20-one + NADP(+) = 5beta-pregnan-3,20-dione + NADPH + H(+). It carries out the reaction 5beta-dihydrotestosterone + NADPH + H(+) = 5beta-androstane-3alpha,17beta-diol + NADP(+). The catalysed reaction is all-trans-retinol + NADP(+) = all-trans-retinal + NADPH + H(+). The enzyme catalyses isatin + NADPH + H(+) = 3-hydroxyindolin-2-one + NADP(+). NADPH-dependent oxidoreductase which catalyzes the reduction of a variety of compounds bearing carbonyl groups including ketosteroids, alpha-dicarbonyl compounds, aldehydes, aromatic ketones and quinones. Reduces all-trans-retinal and 9-cis retinal. Reduces 3-ketosteroids and benzil into 3alpha-hydroxysteroids and S-benzoin, respectively, in contrast to the stereoselectivity of primates DHRS4s which produce 3beta-hydroxysteroids and R-benzoin. In the reverse reaction, catalyzes the NADP-dependent oxidation of 3alpha-hydroxysteroids and alcohol, but with much lower efficiency. Involved in the metabolism of 3alpha-hydroxysteroids, retinoid, isatin and xenobiotic carbonyl compounds. In Rattus norvegicus (Rat), this protein is Dehydrogenase/reductase SDR family member 4 (Dhrs4).